Here is a 477-residue protein sequence, read N- to C-terminus: Aspartyl/glutamyl-tRNA(Asn/Gln) amidotransferase subunit B (477 aa).

The protein belongs to the GatB/GatE family. GatB subfamily. Heterotrimer of A, B and C subunits.

The catalysed reaction is L-glutamyl-tRNA(Gln) + L-glutamine + ATP + H2O = L-glutaminyl-tRNA(Gln) + L-glutamate + ADP + phosphate + H(+). It catalyses the reaction L-aspartyl-tRNA(Asn) + L-glutamine + ATP + H2O = L-asparaginyl-tRNA(Asn) + L-glutamate + ADP + phosphate + 2 H(+). Functionally, allows the formation of correctly charged Asn-tRNA(Asn) or Gln-tRNA(Gln) through the transamidation of misacylated Asp-tRNA(Asn) or Glu-tRNA(Gln) in organisms which lack either or both of asparaginyl-tRNA or glutaminyl-tRNA synthetases. The reaction takes place in the presence of glutamine and ATP through an activated phospho-Asp-tRNA(Asn) or phospho-Glu-tRNA(Gln). The chain is Aspartyl/glutamyl-tRNA(Asn/Gln) amidotransferase subunit B from Coxiella burnetii (strain CbuK_Q154) (Coxiella burnetii (strain Q154)).